The following is an 865-amino-acid chain: Xylosyltransferase 2 (865 aa).

Over 1-15 (MVASARVQKLVRRYK) the chain is Cytoplasmic. A helical; Signal-anchor for type II membrane protein membrane pass occupies residues 16-36 (LAIATALAILLLQGLVVWSFS). Residues 37-865 (GLEEDEPGEK…GPVKADGRLR (829 aa)) are Lumenal-facing. Residues 39–157 (EEDEPGEKGR…EGAPQPTDNG (119 aa)) form a disordered region. Residues 53–65 (RPLDPGEGSKDTD) show a composition bias toward basic and acidic residues. A compositionally biased stretch (basic residues) spans 73–82 (SAGRRHGRWR). Residue asparagine 122 is glycosylated (N-linked (GlcNAc...) asparagine). Over residues 125–137 (GAAAGEALVGAAG) the composition is skewed to low complexity. 4 cysteine pairs are disulfide-bonded: cysteine 162–cysteine 190, cysteine 206–cysteine 448, cysteine 467–cysteine 480, and cysteine 469–cysteine 478. UDP-alpha-D-xylose is bound by residues valine 239, aspartate 267, and 296 to 298 (TIW). Asparagine 327 is a glycosylation site (N-linked (GlcNAc...) asparagine). UDP-alpha-D-xylose is bound at residue 400-401 (DW). Residues serine 481 and 504 to 505 (RK) contribute to the UDP-alpha-D-xylose site. Cystine bridges form between cysteine 581–cysteine 833 and cysteine 826–cysteine 839. An N-linked (GlcNAc...) asparagine glycan is attached at asparagine 683.

This sequence belongs to the glycosyltransferase 14 family. XylT subfamily. As to quaternary structure, monomer. Mg(2+) serves as cofactor. It depends on Mn(2+) as a cofactor. In terms of processing, contains disulfide bonds.

It is found in the golgi apparatus membrane. It localises to the secreted. The enzyme catalyses UDP-alpha-D-xylose + L-seryl-[protein] = 3-O-(beta-D-xylosyl)-L-seryl-[protein] + UDP + H(+). It functions in the pathway glycan metabolism; chondroitin sulfate biosynthesis. The protein operates within glycan metabolism; heparan sulfate biosynthesis. Catalyzes the first step in the biosynthesis of chondroitin sulfate, heparan sulfate and dermatan sulfate proteoglycans, such as DCN. Transfers D-xylose from UDP-D-xylose to specific serine residues of the core protein. In Canis lupus familiaris (Dog), this protein is Xylosyltransferase 2 (XYLT2).